The primary structure comprises 155 residues: SsrA-binding protein (155 aa).

The protein belongs to the SmpB family.

It is found in the cytoplasm. Functionally, required for rescue of stalled ribosomes mediated by trans-translation. Binds to transfer-messenger RNA (tmRNA), required for stable association of tmRNA with ribosomes. tmRNA and SmpB together mimic tRNA shape, replacing the anticodon stem-loop with SmpB. tmRNA is encoded by the ssrA gene; the 2 termini fold to resemble tRNA(Ala) and it encodes a 'tag peptide', a short internal open reading frame. During trans-translation Ala-aminoacylated tmRNA acts like a tRNA, entering the A-site of stalled ribosomes, displacing the stalled mRNA. The ribosome then switches to translate the ORF on the tmRNA; the nascent peptide is terminated with the 'tag peptide' encoded by the tmRNA and targeted for degradation. The ribosome is freed to recommence translation, which seems to be the essential function of trans-translation. This Streptococcus uberis (strain ATCC BAA-854 / 0140J) protein is SsrA-binding protein.